A 290-amino-acid polypeptide reads, in one-letter code: Arylamine N-acetyltransferase, pineal gland isozyme NAT-3 (290 aa).

Cysteine 68 functions as the Acyl-thioester intermediate in the catalytic mechanism. Residues histidine 107 and aspartate 122 contribute to the active site.

It belongs to the arylamine N-acetyltransferase family.

It carries out the reaction an arylamine + acetyl-CoA = an N-acetylarylamine + CoA. The catalysed reaction is an N-hydroxyarylamine + acetyl-CoA = an N-acetoxyarylamine + CoA. In terms of biological role, catalyzes the N- or O-acetylation of various arylamine and heterocyclic amine substrates, and participates in the detoxification of a plethora of hydrazine and arylamine drugs. The sequence is that of Arylamine N-acetyltransferase, pineal gland isozyme NAT-3 from Gallus gallus (Chicken).